Reading from the N-terminus, the 67-residue chain is MAKSIEQMIEEIRDRLNLVNQSLIDPDNYKSADEQEIREIHEYVTSKASFTPSEASAIADALGQIRK.

It belongs to the UPF0435 family.

The chain is UPF0435 protein SSP0913 from Staphylococcus saprophyticus subsp. saprophyticus (strain ATCC 15305 / DSM 20229 / NCIMB 8711 / NCTC 7292 / S-41).